The chain runs to 98 residues: Carboxysome shell protein CsoS1C (98 aa).

The BMC domain maps to 8-93 (ALGMIETRGL…VHSEVENILP (86 aa)).

The protein belongs to the bacterial microcompartments protein family. CsoS1 subfamily. As to quaternary structure, homohexamer with a small central pore. Interacts with the N-terminus (residues 1-136) of RuBisCO (CbbL).

The protein localises to the carboxysome. Functionally, one of shell proteins of the carboxysome, a polyhedral inclusion where RuBisCO (ribulose bisphosphate carboxylase, ccbL-ccbS) is sequestered. Assembles into hexamers which make sheets that form the facets of the polyhedral carboxysome. The shell probably limits the diffusion of CO(2) into and out of the carboxysome. There are estimated to be 2970 CsoS1A/CsoS1C proteins per carboxysome (the proteins differ by only 1 residue). Its function is as follows. Unlike beta-carboxysomes, alpha-carboxysomes (Cb) can form without cargo protein. CsoS2 is essential for Cb formation and is also capable of targeting foreign proteins to the Cb. The Cb shell assembles with the aid of CsoS2; CsoS1A, CsoS1B and CsoS1C form the majority of the shell while CsoS4A and CsoS4B form vertices. CsoS1D forms pseudohexamers that probably control metabolite flux into and out of the shell. This chain is Carboxysome shell protein CsoS1C, found in Halothiobacillus neapolitanus (strain ATCC 23641 / c2) (Thiobacillus neapolitanus).